Here is a 383-residue protein sequence, read N- to C-terminus: Arginine biosynthesis bifunctional protein ArgJ (383 aa).

The substrate site is built by T146, K168, T179, E259, N378, and T383. Catalysis depends on T179, which acts as the Nucleophile.

The protein belongs to the ArgJ family. As to quaternary structure, heterotetramer of two alpha and two beta chains.

It is found in the cytoplasm. It catalyses the reaction N(2)-acetyl-L-ornithine + L-glutamate = N-acetyl-L-glutamate + L-ornithine. It carries out the reaction L-glutamate + acetyl-CoA = N-acetyl-L-glutamate + CoA + H(+). It functions in the pathway amino-acid biosynthesis; L-arginine biosynthesis; L-ornithine and N-acetyl-L-glutamate from L-glutamate and N(2)-acetyl-L-ornithine (cyclic): step 1/1. It participates in amino-acid biosynthesis; L-arginine biosynthesis; N(2)-acetyl-L-ornithine from L-glutamate: step 1/4. Its function is as follows. Catalyzes two activities which are involved in the cyclic version of arginine biosynthesis: the synthesis of N-acetylglutamate from glutamate and acetyl-CoA as the acetyl donor, and of ornithine by transacetylation between N(2)-acetylornithine and glutamate. The chain is Arginine biosynthesis bifunctional protein ArgJ from Thermobifida fusca (strain YX).